Consider the following 345-residue polypeptide: Phosphoribosylformylglycinamidine cyclo-ligase (345 aa).

The protein belongs to the AIR synthase family.

The protein resides in the cytoplasm. It carries out the reaction 2-formamido-N(1)-(5-O-phospho-beta-D-ribosyl)acetamidine + ATP = 5-amino-1-(5-phospho-beta-D-ribosyl)imidazole + ADP + phosphate + H(+). It functions in the pathway purine metabolism; IMP biosynthesis via de novo pathway; 5-amino-1-(5-phospho-D-ribosyl)imidazole from N(2)-formyl-N(1)-(5-phospho-D-ribosyl)glycinamide: step 2/2. In Salmonella typhi, this protein is Phosphoribosylformylglycinamidine cyclo-ligase.